Here is an 819-residue protein sequence, read N- to C-terminus: Aminopeptidase O (819 aa).

His-479 contacts Zn(2+). The active-site Proton acceptor is the Glu-480. 2 residues coordinate Zn(2+): His-483 and Glu-502. Positions 689 to 699 (RRPRKRKRREK) match the Nucleolar localization signal motif.

This sequence belongs to the peptidase M1 family. The cofactor is Zn(2+).

The protein localises to the nucleus. The protein resides in the nucleolus. It is found in the cytoplasm. In terms of biological role, aminopeptidase which catalyzes the hydrolysis of amino acid residues from the N-terminus of peptide or protein substrates. The chain is Aminopeptidase O from Homo sapiens (Human).